The chain runs to 549 residues: Eukaryotic translation initiation factor 3 subunit D-2 (549 aa).

Residues 107–157 (ARVKGRSGRGPGMLGVAGSMAGGGTTSGSTKYGKGRESRRNQGRRFARNAP) form a disordered region. Residues 114–132 (GRGPGMLGVAGSMAGGGTT) are compositionally biased toward gly residues. The tract at residues 288-302 (QFDLLTVNETSLEPP) is RNA gate. The disordered stretch occupies residues 527 to 549 (NSFDSDAEDEENSSEPFANSLDN). The span at 529–539 (FDSDAEDEENS) shows a compositional bias: acidic residues.

The protein belongs to the eIF-3 subunit D family. Component of the eukaryotic translation initiation factor 3 (eIF-3) complex. The eIF-3 complex interacts with pix.

Its subcellular location is the cytoplasm. Functionally, mRNA cap-binding component of the eukaryotic translation initiation factor 3 (eIF-3) complex, which is involved in protein synthesis of a specialized repertoire of mRNAs and, together with other initiation factors, stimulates binding of mRNA and methionyl-tRNAi to the 40S ribosome. The eIF-3 complex specifically targets and initiates translation of a subset of mRNAs involved in cell proliferation. In the eIF-3 complex, eif3d specifically recognizes and binds the 7-methylguanosine cap of a subset of mRNAs. The polypeptide is Eukaryotic translation initiation factor 3 subunit D-2 (Drosophila ananassae (Fruit fly)).